The following is a 588-amino-acid chain: Tripartite motif-containing protein 29 (588 aa).

The disordered stretch occupies residues 1–66; the sequence is MEAADASRSN…GSALKPGEGR (66 aa). Residues S21, S28, S58, and S104 each carry the phosphoserine modification. Phosphotyrosine is present on Y106. The B box-type zinc-finger motif lies at 220-260; that stretch reads FEARKCPVHGKTMELFCQTDQTCICYLCMFQEHKNHSTVTV. Positions 225, 228, 247, and 252 each coordinate Zn(2+). Positions 259-352 form a coiled coil; that stretch reads TVEEAKAEKE…VKVIMDALDE (94 aa). Position 476 is a phosphothreonine (T476). Phosphoserine is present on S489.

Interacts with VIM and HINT1. Interacts with IKBKG/NEMO. Interacts with STING1. Post-translationally, constitutively phosphorylated by PKC on serine/threonine in A431 cells. Expressed in placenta, prostate and thymus.

It is found in the cytoplasm. The protein resides in the lysosome. Its function is as follows. Plays a crucial role in the regulation of macrophage activation in response to viral or bacterial infections within the respiratory tract. Mechanistically, TRIM29 interacts with IKBKG/NEMO in the lysosome where it induces its 'Lys-48' ubiquitination and subsequent degradation. In turn, the expression of type I interferons and the production of pro-inflammatory cytokines are inhibited. Additionally, induces the 'Lys-48' ubiquitination of STING1 in a similar way, leading to its degradation. This is Tripartite motif-containing protein 29 (TRIM29) from Homo sapiens (Human).